Consider the following 541-residue polypeptide: GMP synthase [glutamine-hydrolyzing] (541 aa).

Residues 17–212 (TILVLDFGSQ…AVDICQSTTD (196 aa)) form the Glutamine amidotransferase type-1 domain. Catalysis depends on Cys93, which acts as the Nucleophile. Active-site residues include His186 and Glu188. In terms of domain architecture, GMPS ATP-PPase spans 213 to 416 (WTMGKFVDQE…LGIPEDLVWR (204 aa)). 241–247 (SGGVDST) contacts ATP. XMP is bound by residues Arg315, Asp478, Lys533, and Glu539.

In terms of assembly, homodimer. The cofactor is Mg(2+).

It localises to the cytoplasm. It is found in the cytosol. The enzyme catalyses XMP + L-glutamine + ATP + H2O = GMP + L-glutamate + AMP + diphosphate + 2 H(+). The protein operates within purine metabolism; GMP biosynthesis; GMP from XMP (L-Gln route): step 1/1. In terms of biological role, catalyzes the conversion of xanthine monophosphate (XMP) to GMP in the presence of glutamine and ATP through an adenyl-XMP intermediate. This is GMP synthase [glutamine-hydrolyzing] (GUA1) from Phaeosphaeria nodorum (strain SN15 / ATCC MYA-4574 / FGSC 10173) (Glume blotch fungus).